Reading from the N-terminus, the 343-residue chain is ATP-dependent 6-phosphofructokinase (343 aa).

Residues glycine 10 and 103–106 (GEGT) contribute to the ATP site. Glutamate 104 provides a ligand contact to Mg(2+). Residues 126–128 (TID), arginine 163, 170–172 (MGR), glutamate 223, arginine 267, and 273–276 (HVQR) contribute to the substrate site. Aspartate 128 acts as the Proton acceptor in catalysis.

It belongs to the phosphofructokinase type A (PFKA) family. Mixed-substrate PFK group III subfamily. In terms of assembly, homodimer or homotetramer. Requires Mg(2+) as cofactor.

The protein localises to the cytoplasm. The enzyme catalyses beta-D-fructose 6-phosphate + ATP = beta-D-fructose 1,6-bisphosphate + ADP + H(+). It participates in carbohydrate degradation; glycolysis; D-glyceraldehyde 3-phosphate and glycerone phosphate from D-glucose: step 3/4. In terms of biological role, catalyzes the phosphorylation of D-fructose 6-phosphate to fructose 1,6-bisphosphate by ATP, the first committing step of glycolysis. The chain is ATP-dependent 6-phosphofructokinase from Mycobacterium leprae (strain TN).